The following is a 734-amino-acid chain: Photosystem I P700 chlorophyll a apoprotein A2 (734 aa).

Transmembrane regions (helical) follow at residues 46 to 69 (IFASHFGQLAVIFLWTSGNLFHVA), 135 to 158 (LYTGALFLLALSALFLIAGWLHLQ), 175 to 199 (LNHHLSGLFGVSSLAWTGHLVHVAI), 273 to 291 (IAHHHLAIAVVFIIAGHMY), 330 to 353 (LHFQLGLALAALGVITSLVAQHMY), 369 to 395 (AALYTHHQYIAGFIMTGAFAHGAIFFI), 417 to 439 (AIISHLSWASLFLGFHTLGLYVH), and 517 to 535 (FLVHHAIALGLHTTTSIPV). 2 residues coordinate [4Fe-4S] cluster: C559 and C568. A run of 2 helical transmembrane segments spans residues 575-596 (AFYLSVFWMLNTIGWVTFYWHW) and 643-665 (LSVWAWMFLFGHLVWAIGFMFLI). 3 residues coordinate chlorophyll a: H654, M662, and Y670. W671 serves as a coordination point for phylloquinone. Residues 707 to 727 (LVGLAHFSVGYIFTYAAFLIA) traverse the membrane as a helical segment.

It belongs to the PsaA/PsaB family. The PsaA/B heterodimer binds the P700 chlorophyll special pair and subsequent electron acceptors. PSI consists of a core antenna complex that captures photons, and an electron transfer chain that converts photonic excitation into a charge separation. The eukaryotic PSI reaction center is composed of at least 11 subunits. It depends on P700 is a chlorophyll a/chlorophyll a' dimer, A0 is one or more chlorophyll a, A1 is one or both phylloquinones and FX is a shared 4Fe-4S iron-sulfur center. as a cofactor.

It is found in the plastid. Its subcellular location is the chloroplast thylakoid membrane. It catalyses the reaction reduced [plastocyanin] + hnu + oxidized [2Fe-2S]-[ferredoxin] = oxidized [plastocyanin] + reduced [2Fe-2S]-[ferredoxin]. In terms of biological role, psaA and PsaB bind P700, the primary electron donor of photosystem I (PSI), as well as the electron acceptors A0, A1 and FX. PSI is a plastocyanin-ferredoxin oxidoreductase, converting photonic excitation into a charge separation, which transfers an electron from the donor P700 chlorophyll pair to the spectroscopically characterized acceptors A0, A1, FX, FA and FB in turn. Oxidized P700 is reduced on the lumenal side of the thylakoid membrane by plastocyanin. The sequence is that of Photosystem I P700 chlorophyll a apoprotein A2 from Angiopteris evecta (Mule's foot fern).